We begin with the raw amino-acid sequence, 181 residues long: ATP-dependent protease subunit HslV (181 aa).

Thr7 is an active-site residue. Residues Gly166, Cys169, and Thr172 each contribute to the Na(+) site.

This sequence belongs to the peptidase T1B family. HslV subfamily. A double ring-shaped homohexamer of HslV is capped on each side by a ring-shaped HslU homohexamer. The assembly of the HslU/HslV complex is dependent on binding of ATP.

Its subcellular location is the cytoplasm. The catalysed reaction is ATP-dependent cleavage of peptide bonds with broad specificity.. With respect to regulation, allosterically activated by HslU binding. Its function is as follows. Protease subunit of a proteasome-like degradation complex believed to be a general protein degrading machinery. The protein is ATP-dependent protease subunit HslV of Delftia acidovorans (strain DSM 14801 / SPH-1).